Consider the following 241-residue polypeptide: 2,3-bisphosphoglycerate-dependent phosphoglycerate mutase (241 aa).

His12 functions as the Tele-phosphohistidine intermediate in the catalytic mechanism. Residues 24-25, Arg61, 117-120, and Lys128 each bind substrate; these read SG and ERYY. Glu117 functions as the Proton donor/acceptor in the catalytic mechanism.

It belongs to the phosphoglycerate mutase family. BPG-dependent PGAM subfamily.

It carries out the reaction (2R)-2-phosphoglycerate = (2R)-3-phosphoglycerate. Its pathway is carbohydrate degradation; glycolysis; pyruvate from D-glyceraldehyde 3-phosphate: step 3/5. In terms of biological role, catalyzes the interconversion of 2-phosphoglycerate and 3-phosphoglycerate. This Methanosarcina mazei (strain ATCC BAA-159 / DSM 3647 / Goe1 / Go1 / JCM 11833 / OCM 88) (Methanosarcina frisia) protein is 2,3-bisphosphoglycerate-dependent phosphoglycerate mutase.